The following is a 273-amino-acid chain: DNA replication complex GINS protein psf2 (273 aa).

2 disordered regions span residues 88-110 and 240-273; these read KEDP…SQPG and ASAE…DMGL. The span at 244 to 257 shows a compositional bias: basic and acidic residues; sequence ATRREEEEEARRGG. Acidic residues predominate over residues 261–273; that stretch reads GDGDEDSDEDMGL.

Belongs to the GINS2/PSF2 family. As to quaternary structure, component of the GINS complex which is a heterotetramer of div-26/sld5, drc-1/psf1, drc-2/psf2 and drc-3/psf3.

The protein resides in the nucleus. Functionally, the GINS complex plays an essential role in the initiation of DNA replication. Has a role in chromosome segregation. This Neurospora crassa (strain ATCC 24698 / 74-OR23-1A / CBS 708.71 / DSM 1257 / FGSC 987) protein is DNA replication complex GINS protein psf2 (drc-2).